A 385-amino-acid polypeptide reads, in one-letter code: Nod factor hydrolase protein 1 (385 aa).

The first 21 residues, 1–21, serve as a signal peptide directing secretion; sequence MANFLKLKQFLTLVLILLALA. The 350-residue stretch at 36–385 folds into the GH18 domain; the sequence is RVKGIYWIEN…TASKAWRPES (350 aa). Asn115 and Asn134 each carry an N-linked (GlcNAc...) asparagine glycan. Glu153 acts as the Proton donor in catalysis. 2 N-linked (GlcNAc...) asparagine glycosylation sites follow: Asn233 and Asn247.

Belongs to the glycosyl hydrolase 18 family. Chitinase class V subfamily.

Symbiotic enzyme that hydrolytically inactivates Nod factors (NFs) with a C16:2 acyl chain produced by the microsymbiont Sinorhizobium meliloti. NFs are lipo-chitooligosaccharide signaling molecules produced by nitrogen-fixing rhizobia to initiate nodulation (symbiosis) on the roots of legumes. Controls NF hydrolysis at the stage of root hair infection. Involved in the regulation of growth and branching of mature nodules. Modulates NF levels and signaling to complete transition of infected nodules to functional nitrogen-fixing organs. Lacks chitinase activity in vitro toward glycol chitin, carboxymethyl-chitin, colloidal chitin, and the chitin oligosaccharides (N-acetylglucosamine) (GlcNAc)6 and (GlcNAc)5. This is Nod factor hydrolase protein 1 from Medicago truncatula (Barrel medic).